The following is a 298-amino-acid chain: Homoserine kinase (298 aa).

Residue 79–89 coordinates ATP; the sequence is PIARGLGSSGA.

Belongs to the GHMP kinase family. Homoserine kinase subfamily.

The protein localises to the cytoplasm. The enzyme catalyses L-homoserine + ATP = O-phospho-L-homoserine + ADP + H(+). It participates in amino-acid biosynthesis; L-threonine biosynthesis; L-threonine from L-aspartate: step 4/5. Functionally, catalyzes the ATP-dependent phosphorylation of L-homoserine to L-homoserine phosphate. In Pyrobaculum islandicum (strain DSM 4184 / JCM 9189 / GEO3), this protein is Homoserine kinase.